Consider the following 329-residue polypeptide: Terpene synthase 7 (329 aa).

The short motif at 99–104 is the DDxx(x)D/E motif element; the sequence is DDLYLE. Residues 230-238 carry the NDxxSxxxD/E motif motif; sequence NDIHSFNKE.

This sequence belongs to the terpene synthase family.

Its function is as follows. Terpene synthase that converts its substrate farnesyl diphosphate (FPP) into 6 yet unidentified sesquiterpenes. The polypeptide is Terpene synthase 7 (Dictyostelium purpureum (Slime mold)).